Here is a 100-residue protein sequence, read N- to C-terminus: Small ribosomal subunit protein bS20 (100 aa).

Residues 1–18 show a composition bias toward basic and acidic residues; it reads MPNKKSAEKRVRQSEQRR. Residues 1-26 form a disordered region; sequence MPNKKSAEKRVRQSEQRRQKNRGYQK.

The protein belongs to the bacterial ribosomal protein bS20 family.

In terms of biological role, binds directly to 16S ribosomal RNA. This is Small ribosomal subunit protein bS20 from Petrotoga mobilis (strain DSM 10674 / SJ95).